Consider the following 190-residue polypeptide: Coat protein (190 aa).

It belongs to the potexvirus capsid protein family.

It localises to the virion. Required for genome encapsidation. Forms ribonucleoprotein complexes along with TGB1 helicase and viral RNA. The polypeptide is Coat protein (White clover mosaic virus (strain M) (WCMV)).